The chain runs to 321 residues: Opticin (321 aa).

Positions 1–19 (MKLLALLSLLILMLQEART) are cleaved as a signal peptide. The residue at position 61 (Tyr-61) is a Sulfotyrosine. One can recognise an LRRNT domain in the interval 105–142 (LLAAPANHGLPTCLICVCLGSSVYCDDADLENIPPLPQ). LRR repeat units lie at residues 143–164 (TTAY…DFKG), 167–188 (KLKR…ALRL), 191–212 (ALRD…PTSI), 237–258 (KLQF…LPLS), 259–279 (LRSL…AFCD), and 289–309 (PLED…PSAY). Residues Cys-278 and Cys-311 are joined by a disulfide bond. Asn-301 is a glycosylation site (N-linked (GlcNAc...) asparagine).

It belongs to the small leucine-rich proteoglycan (SLRP) family. SLRP class III subfamily. As to quaternary structure, homodimer. In terms of processing, O-glycosylated (sialylated oligosaccharides). Post-translationally, sulfated on tyrosine residues. Proteolytically cleaved by MMP1, MMP2, MMP3, MMP7, MMP8, MMP9, ADAMTS4, and ADAMTS5. Proteolytically cleaved by MMP13.

Its subcellular location is the secreted. The protein resides in the extracellular space. It localises to the extracellular matrix. Inhibits angiogenesis in the vitreous humor of the eye, and therefore represses neovascularization. Binds collagen fibrils. May be involved in collagen fiber organization via regulation of other members of the small leucine-rich repeat proteoglycan superfamily. The chain is Opticin (OPTC) from Bos taurus (Bovine).